A 392-amino-acid polypeptide reads, in one-letter code: Ceramide synthase 5 (392 aa).

At M1–H46 the chain is on the lumenal side. The N-linked (GlcNAc...) asparagine glycan is linked to N26. Residues I47–F67 form a helical membrane-spanning segment. A homeobox-like region spans residues C75 to P136. The TLC domain maps to T139–I340. Transmembrane regions (helical) follow at residues F148 to F168, L183 to F203, F214 to N234, and L272 to I292. The Last loop motif motif lies at E299–S309. Residues W311 to I331 form a helical membrane-spanning segment. The Cytoplasmic segment spans residues A332 to E392. Positions R349–E392 are disordered. A compositionally biased stretch (polar residues) spans T362–N378.

Interacts with PAQR4; the interaction regulates the stability and activity of CERS5 and is inhibited in presence of ceramides. Phosphorylated at the C-terminus by CK2.

It is found in the endoplasmic reticulum membrane. The catalysed reaction is a sphingoid base + hexadecanoyl-CoA = an N-hexadecanoyl-sphingoid base + CoA + H(+). It carries out the reaction sphinganine + hexadecanoyl-CoA = N-hexadecanoylsphinganine + CoA + H(+). The enzyme catalyses hexadecasphinganine + hexadecanoyl-CoA = N-hexadecanoylhexadecasphinganine + CoA + H(+). It catalyses the reaction sphing-4-enine + hexadecanoyl-CoA = N-hexadecanoylsphing-4-enine + CoA + H(+). The catalysed reaction is 2-hydroxyhexadecanoyl-CoA + sphinganine = N-(2-hydroxyhexadecanoyl)-sphinganine + CoA + H(+). It carries out the reaction sphinganine + tetradecanoyl-CoA = N-(tetradecanoyl)-sphinganine + CoA + H(+). The enzyme catalyses sphinganine + octadecanoyl-CoA = N-(octadecanoyl)-sphinganine + CoA + H(+). It catalyses the reaction sphinganine + (9Z)-octadecenoyl-CoA = N-(9Z-octadecenoyl)-sphinganine + CoA + H(+). The catalysed reaction is a fatty acyl-CoA + sphing-4-enine = an N-acylsphing-4-enine + CoA + H(+). The protein operates within lipid metabolism; sphingolipid metabolism. Its activity is regulated as follows. Inhibited by fumonisin B1. Its function is as follows. Ceramide synthase that catalyzes the transfer of the acyl chain from acyl-CoA to a sphingoid base, with high selectivity toward palmitoyl-CoA (hexadecanoyl-CoA; C16:0-CoA). Can use other acyl donors, but with less efficiency. N-acylates sphinganine and sphingosine bases to form dihydroceramides and ceramides in de novo synthesis and salvage pathways, respectively. Plays a role in de novo ceramide synthesis and surfactant homeostasis in pulmonary epithelia. This is Ceramide synthase 5 from Homo sapiens (Human).